A 121-amino-acid chain; its full sequence is Small ribosomal subunit protein uS13 (121 aa).

Residues 93 to 121 form a disordered region; it reads KGLPLRGQKTKTNARTRKGPKKTIANKKK.

This sequence belongs to the universal ribosomal protein uS13 family. As to quaternary structure, part of the 30S ribosomal subunit. Forms a loose heterodimer with protein S19. Forms two bridges to the 50S subunit in the 70S ribosome.

Located at the top of the head of the 30S subunit, it contacts several helices of the 16S rRNA. In the 70S ribosome it contacts the 23S rRNA (bridge B1a) and protein L5 of the 50S subunit (bridge B1b), connecting the 2 subunits; these bridges are implicated in subunit movement. Contacts the tRNAs in the A and P-sites. This chain is Small ribosomal subunit protein uS13, found in Clostridium perfringens (strain ATCC 13124 / DSM 756 / JCM 1290 / NCIMB 6125 / NCTC 8237 / Type A).